We begin with the raw amino-acid sequence, 209 residues long: Uridine kinase (209 aa).

ATP is bound at residue 12–19 (GGSGSGKT).

This sequence belongs to the uridine kinase family.

The protein resides in the cytoplasm. It catalyses the reaction uridine + ATP = UMP + ADP + H(+). It carries out the reaction cytidine + ATP = CMP + ADP + H(+). The protein operates within pyrimidine metabolism; CTP biosynthesis via salvage pathway; CTP from cytidine: step 1/3. It participates in pyrimidine metabolism; UMP biosynthesis via salvage pathway; UMP from uridine: step 1/1. This chain is Uridine kinase, found in Streptococcus mutans serotype c (strain ATCC 700610 / UA159).